Here is a 240-residue protein sequence, read N- to C-terminus: Vesicle-associated membrane protein 727 (240 aa).

Residues 1–215 (MSQKGLIYSF…MWLQSLQMKL (215 aa)) are Cytoplasmic-facing. The Longin domain occupies 6-133 (LIYSFVAKGT…NLDREFGPIL (128 aa)). The v-SNARE coiled-coil homology domain occupies 149-209 (KLSKLKAQIT…RQLRRKMWLQ (61 aa)). The chain crosses the membrane as a helical; Anchor for type IV membrane protein span at residues 216 to 236 (MVAGAVFSFILIVWVVACGGF). Topologically, residues 237-240 (KCSS) are vesicular.

This sequence belongs to the synaptobrevin family. As to quaternary structure, interacts with subunits of the class C core vacuole/endosome tethering (CORVET) complex including VPS11, VCL1, VPS18, VPS33, VPS3 and VPS8. Highly expressed in flowers. Detected in leaves, stems and roots.

It is found in the early endosome membrane. Its subcellular location is the endosome membrane. Its function is as follows. Involved in the targeting and/or fusion of transport vesicles to their target membrane. The chain is Vesicle-associated membrane protein 727 (VAMP727) from Arabidopsis thaliana (Mouse-ear cress).